A 101-amino-acid chain; its full sequence is Protein S100-A7-like 2 (101 aa).

2 consecutive EF-hand domains span residues 13-48 (IVAM…SGCE) and 50-85 (SDMD…ITID). Residues D63, N65, D67, K69, and E74 each contribute to the Ca(2+) site. Zn(2+)-binding residues include H87 and H91.

Belongs to the S-100 family.

In Homo sapiens (Human), this protein is Protein S100-A7-like 2 (S100A7L2).